A 315-amino-acid polypeptide reads, in one-letter code: Thioredoxin reductase (315 aa).

An FAD-binding site is contributed by 45–52; sequence EGNTPGGK. Cysteine 145 and cysteine 148 form a disulfide bridge. 288–297 provides a ligand contact to FAD; it reads DCRSKSFRQI.

Belongs to the class-II pyridine nucleotide-disulfide oxidoreductase family. In terms of assembly, homodimer. The cofactor is FAD.

Its subcellular location is the cytoplasm. The catalysed reaction is [thioredoxin]-dithiol + NADP(+) = [thioredoxin]-disulfide + NADPH + H(+). This is Thioredoxin reductase (trxB) from Mycoplasma genitalium (strain ATCC 33530 / DSM 19775 / NCTC 10195 / G37) (Mycoplasmoides genitalium).